Reading from the N-terminus, the 681-residue chain is SRSF protein kinase 2 (681 aa).

The segment at 1–63 (MSVNSEKSSS…EQEDPADYCK (63 aa)) is disordered. A compositionally biased stretch (pro residues) spans 22–41 (LVPPPPPPPPPPPLPDPAPP). Residues 42-59 (EPEEEILGSDDEEQEDPA) show a composition bias toward acidic residues. Serine 50 is modified (phosphoserine). In terms of domain architecture, Protein kinase spans 79-681 (YHVIRKLGWG…ECLRHPWLNS (603 aa)). ATP-binding positions include 85–93 (LGWGHFSTV) and lysine 108. Aspartate 212 serves as the catalytic Proton acceptor. Disordered regions lie at residues 237-270 (WQKA…KKKL), 302-452 (ENIT…PLFS), and 467-499 (GSPL…KTKT). Threonine 331 and threonine 332 each carry phosphothreonine. Serine 378 bears the Phosphoserine mark. Positions 395-419 (QLEDEEDDEDDCANPEEYNLDEPNA) are enriched in acidic residues. Residues 421 to 431 (SDYTYSSSYEQ) are compositionally biased toward polar residues. Serine 468 is subject to Phosphoserine. Phosphothreonine is present on threonine 471. Serine 477, serine 479, and serine 483 each carry phosphoserine. Phosphothreonine; by PKB/AKT1 is present on threonine 485. A phosphoserine mark is found at serine 487 and serine 490. Serine 581 bears the Phosphoserine; by CK2 mark.

It belongs to the protein kinase superfamily. CMGC Ser/Thr protein kinase family. Associates with U4/U6-U5 tri-small nuclear ribonucleoproteins (U4/U6-U5 tri-snRNPs). Interacts with PKB/AKT1 in a phosphorylation-dependent manner. The phosphorylated form (by PKB/AKT1) interacts with YWHAB and YWHAE. Interaction with YWHAB suppresses its cleavage by caspases and inhibits the release of its N-terminal pro-apoptotic fragment. Interacts with SFN. Interacts with ACIN1. Interacts with POLR2A/RNA polymerase II; the interaction occurs during the co-transcriptional formation of inappropriate R-loops. Mg(2+) serves as cofactor. Phosphorylation at Thr-485 by PKB/AKT1 enhances its stimulatory activity in triggering cyclin-D1 (CCND1) expression and promoting apoptosis in neurons, which can be blocked by YWHAB. It also enhances its protein kinase activity toward ACIN1 and SRSF2, promotes its nuclear translocation and prevents its proteolytic cleavage. In terms of processing, proteolytically cleaved at Asp-137 and Asp-401 by caspase-3 during apoptotic cell death. Cleavage at Asp-137 which is the major site of cleavage, produces a small N-terminal fragment that translocates into nucleus and promotes VP16-induced apoptosis. As to expression, expressed in testes, lung and brain.

The protein resides in the cytoplasm. The protein localises to the nucleus. Its subcellular location is the nucleoplasm. It localises to the nucleus speckle. It is found in the chromosome. It catalyses the reaction L-seryl-[protein] + ATP = O-phospho-L-seryl-[protein] + ADP + H(+). The enzyme catalyses L-threonyl-[protein] + ATP = O-phospho-L-threonyl-[protein] + ADP + H(+). With respect to regulation, activated by phosphorylation on Ser-50 and Ser-581. Serine/arginine-rich protein-specific kinase which specifically phosphorylates its substrates at serine residues located in regions rich in arginine/serine dipeptides, known as RS domains and is involved in the phosphorylation of SR splicing factors and the regulation of splicing. Promotes neuronal apoptosis by up-regulating cyclin-D1 (CCND1) expression. This is done by the phosphorylation of SRSF2, leading to the suppression of p53/TP53 phosphorylation thereby relieving the repressive effect of p53/TP53 on cyclin-D1 (CCND1) expression. Phosphorylates ACIN1, and redistributes it from the nuclear speckles to the nucleoplasm, resulting in cyclin A1 but not cyclin A2 up-regulation. Plays an essential role in spliceosomal B complex formation via the phosphorylation of DDX23/PRP28. Probably by phosphorylating DDX23, leads to the suppression of incorrect R-loops formed during transcription; R-loops are composed of a DNA:RNA hybrid and the associated non-template single-stranded DNA. In Mus musculus (Mouse), this protein is SRSF protein kinase 2.